Consider the following 251-residue polypeptide: Short chain dehydrogenase gsfK (251 aa).

Positions 14, 33, 60, 88, and 122 each coordinate NADP(+). Active-site proton donor residues include serine 143 and tyrosine 161. Residues tyrosine 161, lysine 165, valine 192, and threonine 194 each contribute to the NADP(+) site. Lysine 165 acts as the Lowers pKa of active site Tyr in catalysis.

It belongs to the short-chain dehydrogenases/reductases (SDR) family.

Its pathway is secondary metabolite biosynthesis; terpenoid biosynthesis. Short chain dehydrogenase; part of the gene cluster that mediates the biosynthesis of griseofulvin, an important antifungal drug that has been in use for a long time for treating dermatophyte infections. The first step of the pathway is the formation of the heptaketide backbone by gsfA which is initiated by priming with acetyl-CoA, followed by sequential condensations of 6 malonyl-CoA units. The resulting benzophenone can undergo a spontaneous dehydration to form norlichexanthone. However, the true precursor for the griseofulvin biosynthesis is not norlichexanthone, but the heptaketide benzophenone that is O-methylated at 3-OH by gsfB to produce griseophenone D which is further methylated at 9-OH by gsfC to yield griseophenone C. Griseophenone C is then substrate of halogenase gsfI which is responsible for the regio-specific chlorination at the C13 position to form griseophenone B. The cytochrome P450 gsfF catalyzes the coupling of orcinol and phloroglucinol rings in griseophenone B to form desmethyl-dehydrogriseofulvin A which is further methylated at 5-OH by gsfD to yield dehydrogriseofulvin. Finally, gsfE performs stereospecific reduction of enone 18 of dehydrogriseofulvin to afford the final product griseofulvin. The exact role of gsfK within the pathway has not been identified yet. The chain is Short chain dehydrogenase gsfK from Penicillium aethiopicum.